Reading from the N-terminus, the 290-residue chain is UPF0761 membrane protein YihY (290 aa).

Over methionine 1–serine 43 the chain is Cytoplasmic. Residues leucine 44 to phenylalanine 64 traverse the membrane as a helical segment. Over serine 65–alanine 103 the chain is Periplasmic. A helical transmembrane segment spans residues valine 104–leucine 124. The Cytoplasmic segment spans residues asparagine 125–serine 139. A helical membrane pass occupies residues phenylalanine 140 to isoleucine 160. Topologically, residues serine 161 to asparagine 179 are periplasmic. Residues valine 180–valine 200 form a helical membrane-spanning segment. Over proline 201 to aspartate 209 the chain is Cytoplasmic. Residues alanine 210 to leucine 230 form a helical membrane-spanning segment. Topologically, residues tyrosine 231–glycine 243 are periplasmic. The helical transmembrane segment at valine 244–leucine 264 threads the bilayer. The Cytoplasmic portion of the chain corresponds to glycine 265–proline 290.

Belongs to the UPF0761 family.

Its subcellular location is the cell inner membrane. This chain is UPF0761 membrane protein YihY, found in Salmonella typhimurium (strain LT2 / SGSC1412 / ATCC 700720).